Reading from the N-terminus, the 450-residue chain is Exodeoxyribonuclease 7 large subunit (450 aa).

Belongs to the XseA family. In terms of assembly, heterooligomer composed of large and small subunits.

Its subcellular location is the cytoplasm. It catalyses the reaction Exonucleolytic cleavage in either 5'- to 3'- or 3'- to 5'-direction to yield nucleoside 5'-phosphates.. Functionally, bidirectionally degrades single-stranded DNA into large acid-insoluble oligonucleotides, which are then degraded further into small acid-soluble oligonucleotides. This is Exodeoxyribonuclease 7 large subunit from Rickettsia felis (strain ATCC VR-1525 / URRWXCal2) (Rickettsia azadi).